A 304-amino-acid chain; its full sequence is uncharacterized protein (304 aa).

Positions 1-10 (MLWAHRKKRK) are enriched in basic residues. Residues 1–28 (MLWAHRKKRKAATETTEDKPLESHRAND) form a disordered region. Over residues 16–27 (TEDKPLESHRAN) the composition is skewed to basic and acidic residues. Residue Ser39 is modified to Phosphoserine. Residues 91 to 101 (KQKISGSSMTK) are compositionally biased toward polar residues. 3 disordered regions span residues 91 to 115 (KQKISGSSMTKEMQRESGKSPSMED), 138 to 160 (SMLQRSTTHRRKGHAESRNISPE), and 190 to 304 (SHTV…IYGS). Over residues 151-160 (HAESRNISPE) the composition is skewed to basic and acidic residues. Ser158 carries the phosphoserine modification. Over residues 195-206 (SQSRHSNQSHHS) the composition is skewed to low complexity. The segment covering 208–223 (PSHQSNQSHPVYSSYQ) has biased composition (polar residues). A compositionally biased stretch (low complexity) spans 229–248 (HLSPQSYPSYSSHQSHPGHS). The segment covering 249-263 (NHQGHSGLSSHQTHL) has biased composition (polar residues). Over residues 264-292 (GHSNHQGHPGHSSHQSHQGQPGHPSHQSH) the composition is skewed to low complexity.

This is an uncharacterized protein from Mus musculus (Mouse).